The primary structure comprises 240 residues: Uridylate kinase (240 aa).

12-15 contacts ATP; the sequence is KLSG. Positions 20–25 are involved in allosteric activation by GTP; sequence GEQGNG. Gly54 lines the UMP pocket. The ATP site is built by Gly55 and Arg59. UMP-binding positions include Asp74 and 135–142; that span reads TGNPYFST. The ATP site is built by Asn163, Tyr169, and Asp172.

The protein belongs to the UMP kinase family. Homohexamer.

Its subcellular location is the cytoplasm. It carries out the reaction UMP + ATP = UDP + ADP. The protein operates within pyrimidine metabolism; CTP biosynthesis via de novo pathway; UDP from UMP (UMPK route): step 1/1. Allosterically activated by GTP. Inhibited by UTP. Functionally, catalyzes the reversible phosphorylation of UMP to UDP. In Bacillus licheniformis (strain ATCC 14580 / DSM 13 / JCM 2505 / CCUG 7422 / NBRC 12200 / NCIMB 9375 / NCTC 10341 / NRRL NRS-1264 / Gibson 46), this protein is Uridylate kinase.